A 274-amino-acid chain; its full sequence is 2,3,4,5-tetrahydropyridine-2,6-dicarboxylate N-succinyltransferase (274 aa).

Substrate contacts are provided by Arg104 and Asp141.

This sequence belongs to the transferase hexapeptide repeat family. In terms of assembly, homotrimer.

Its subcellular location is the cytoplasm. It catalyses the reaction (S)-2,3,4,5-tetrahydrodipicolinate + succinyl-CoA + H2O = (S)-2-succinylamino-6-oxoheptanedioate + CoA. Its pathway is amino-acid biosynthesis; L-lysine biosynthesis via DAP pathway; LL-2,6-diaminopimelate from (S)-tetrahydrodipicolinate (succinylase route): step 1/3. In Citrobacter koseri (strain ATCC BAA-895 / CDC 4225-83 / SGSC4696), this protein is 2,3,4,5-tetrahydropyridine-2,6-dicarboxylate N-succinyltransferase.